Here is a 107-residue protein sequence, read N- to C-terminus: DNA polymerase delta subunit 4 (107 aa).

A PCNA-interaction protein motif (PIP box) motif is present at residues 1–16 (MGRKRLITDSYPVVKR). Residues 1-35 (MGRKRLITDSYPVVKRREGSAGHSKGELAPDLGEE) form a disordered region. The span at 15–28 (KRREGSAGHSKGEL) shows a compositional bias: basic and acidic residues.

Belongs to the DNA polymerase delta subunit 4 family. As to quaternary structure, component of the tetrameric DNA polymerase delta complex (Pol-delta4), which consists of POLD1/p125, POLD2/p50, POLD3/p66/p68 and POLD4/p12, with POLD1 bearing DNA polymerase and 3' to 5' proofreading exonuclease activities. Within this complex, directly interacts with POLD1 and POLD2. Directly interacts with PCNA, as do POLD1 and POLD3; this interaction stimulates Pol-delta4 polymerase activity. As POLD1 and POLD2, directly interacts with WRNIP1; this interaction stimulates DNA polymerase delta-mediated DNA synthesis, independently of the presence of PCNA, possibly by increasing initiation frequency. Upon genotoxic stress induced by DNA damaging agents or by replication stress, POLD4 is proteolytically degraded and Pol-delta4 is converted into a trimeric form of the complex (Pol-delta3) that has an increased proofreading activity. The DNA polymerase delta complex interacts with POLDIP2; this interaction is probably mediated through direct binding to POLD2. Ubiquitinated; undergoes 'Lys-48'-linked ubiquitination in response to UV irradiation, leading to proteasomal degradation. This modification is partly mediated by RNF8 and by the DCX(DTL) E3 ubiquitin ligase complex (also called CRL4(CDT2)). Efficient degradation requires the presence of PCNA and is required for the inhibition of fork progression after DNA damage.

Its subcellular location is the nucleus. Functionally, as a component of the tetrameric DNA polymerase delta 4 complex (Pol-delta4), plays a role in high fidelity genome replication and repair. Within this complex, increases the rate of DNA synthesis and decreases fidelity by regulating POLD1 polymerase and proofreading 3' to 5' exonuclease activity. Pol-delta4 participates in Okazaki fragment processing, through both the short flap pathway, as well as a nick translation system. Under conditions of DNA replication stress, required for the repair of broken replication forks through break-induced replication (BIR), a mechanism that may induce segmental genomic duplications of up to 200 kb. Involved in Pol-delta4 translesion synthesis (TLS) of templates carrying O6-methylguanine or abasic sites. Its degradation in response to DNA damage is required for the inhibition of fork progression and cell survival. This chain is DNA polymerase delta subunit 4 (POLD4), found in Bos taurus (Bovine).